A 113-amino-acid polypeptide reads, in one-letter code: MSSVYIVEEHYIPYSVAKKLLTDVIRSGGSSNLLQRTYDYLNSVEKCDAESAQKVIEELSNIVSREDVRAILASICPTTSDEVRSILVMDTNKTYTSEDIQKIIDIIRKYIKS.

The protein belongs to the eukaryotic RPB4 RNA polymerase subunit family. Part of the 13-subunit RNA polymerase complex. Forms a stalk with Rpo7 that extends from the main structure.

The protein resides in the cytoplasm. It carries out the reaction RNA(n) + a ribonucleoside 5'-triphosphate = RNA(n+1) + diphosphate. Functionally, DNA-dependent RNA polymerase (RNAP) catalyzes the transcription of DNA into RNA using the four ribonucleoside triphosphates as substrates. This subunit is less well bound than the others. The protein is DNA-directed RNA polymerase subunit Rpo4 of Saccharolobus solfataricus (strain ATCC 35092 / DSM 1617 / JCM 11322 / P2) (Sulfolobus solfataricus).